The following is a 635-amino-acid chain: Probable extracellular metalloproteinase 1 (635 aa).

The N-terminal stretch at 1–19 (MHGLLLAAGLLSLPLHVLA) is a signal peptide. A propeptide spanning residues 20–246 (HPQPSTSTSL…VHNVVDYVAH (227 aa)) is cleaved from the precursor. N-linked (GlcNAc...) asparagine glycosylation occurs at Asn287. His430 serves as a coordination point for Zn(2+). Residue Glu431 is part of the active site. His434 provides a ligand contact to Zn(2+). N-linked (GlcNAc...) asparagine glycans are attached at residues Asn475, Asn594, and Asn623.

It belongs to the peptidase M36 family. Zn(2+) serves as cofactor.

Its subcellular location is the secreted. Its function is as follows. Secreted metalloproteinase probably acting as a virulence factor. The sequence is that of Probable extracellular metalloproteinase 1 (MEP1) from Arthroderma benhamiae (strain ATCC MYA-4681 / CBS 112371) (Trichophyton mentagrophytes).